The sequence spans 198 residues: Recombination protein RecR (198 aa).

The C4-type zinc finger occupies 57–72 (CSICGNLTDDDPCHIC). Residues 80–175 (ETILVVEASK…KVTRLARGLA (96 aa)) form the Toprim domain.

The protein belongs to the RecR family.

May play a role in DNA repair. It seems to be involved in an RecBC-independent recombinational process of DNA repair. It may act with RecF and RecO. The protein is Recombination protein RecR of Streptococcus equi subsp. zooepidemicus (strain MGCS10565).